Here is a 115-residue protein sequence, read N- to C-terminus: NAD(P)H-quinone oxidoreductase subunit M, organellar chromatophore (115 aa).

It belongs to the complex I NdhM subunit family. NDH-1 can be composed of about 15 different subunits; different subcomplexes with different compositions have been identified which probably have different functions.

It is found in the plastid. The protein localises to the organellar chromatophore thylakoid membrane. The catalysed reaction is a plastoquinone + NADH + (n+1) H(+)(in) = a plastoquinol + NAD(+) + n H(+)(out). The enzyme catalyses a plastoquinone + NADPH + (n+1) H(+)(in) = a plastoquinol + NADP(+) + n H(+)(out). NDH-1 shuttles electrons from an unknown electron donor, via FMN and iron-sulfur (Fe-S) centers, to quinones in the respiratory and/or the photosynthetic chain. The immediate electron acceptor for the enzyme in this species is believed to be plastoquinone. Couples the redox reaction to proton translocation, and thus conserves the redox energy in a proton gradient. In Paulinella chromatophora, this protein is NAD(P)H-quinone oxidoreductase subunit M, organellar chromatophore.